Here is a 242-residue protein sequence, read N- to C-terminus: MSSFFVAGTDTNVGKTTAARAMIQALQGQGVQVVGYKPIACCGEESIYPVAQSENTSDYDHFVNADVLTLMHSTKENVSYQDINSYTFSHCAPMLTQDKMRIKLDKINCDLTRLNQTYQSVVVEGSFGLMTPMAEGKSFADWIAQQKMPVVLVVGIKDGCVNHALLTVKVIQQLGVPLLGWIANRINPLLSHYAEIVDLLVEHIDAPLLGKIPYLHKPEEQELGHYLTNIDRLMYMQTEFIK.

12–17 (NVGKTT) is a binding site for ATP. Threonine 16 contributes to the Mg(2+) binding site. Residue lysine 37 is part of the active site. Aspartate 66 is a binding site for ATP. The Mg(2+) site is built by aspartate 66 and glutamate 124. ATP contacts are provided by residues 184–185 (NR), 213–215 (PYL), and glutamate 220.

This sequence belongs to the dethiobiotin synthetase family. As to quaternary structure, homodimer. Mg(2+) serves as cofactor.

The protein localises to the cytoplasm. It catalyses the reaction (7R,8S)-7,8-diammoniononanoate + CO2 + ATP = (4R,5S)-dethiobiotin + ADP + phosphate + 3 H(+). It functions in the pathway cofactor biosynthesis; biotin biosynthesis; biotin from 7,8-diaminononanoate: step 1/2. Catalyzes a mechanistically unusual reaction, the ATP-dependent insertion of CO2 between the N7 and N8 nitrogen atoms of 7,8-diaminopelargonic acid (DAPA, also called 7,8-diammoniononanoate) to form a ureido ring. This chain is ATP-dependent dethiobiotin synthetase BioD 1, found in Haemophilus influenzae (strain ATCC 51907 / DSM 11121 / KW20 / Rd).